The sequence spans 934 residues: MAGKLRVHELAKKLGVTSKELLATLKEQGEFVKTASSTVEPPVVKKMKQFYGVAQESKPTTPPSPLAQAGSVPDSTQRGPKPGAKPAAKPEAAPKPGTAAAKPSAKPSPAAAAKAAPAAKATPTPAEAAPKPGQAAAKPAAKPGQKPARAAGKPGPKPGPKPGARPQRVANNPFSSTTERPPRPRGGATPGDMPRPGGTRGGAGRGQAPRPGARPAQGQGRGQGTAKPGAARQGGGRRPSPAMMPATPSPGQMPAKSAAGFGGGRGRGGRPGGPGGPGGPGGPGPRGGRGGRRGGTAGAFGRPGGPPRRGRKSKRQKRNEYEAMQAPKVVGGVKLPSGNGEKIRLARGASLADFADKINADAAALVQALFNLGEMVTATQSVSDETLQLLGDEMDYKVEVVSPEDEDRELLESFDLQFGEDEGDDEDLAQRPPVVTVMGHVDHGKTRLLDTIRKENVGSGEAGGITQHIGAYQVSVNMEGVERPVTFLDTPGHEAFTAMRARGAKSTDIAILVVAADDGVMPQTVEAINHAKAAEVPVVVAVNKIDKPTAQPDKIRGQLTEYGLVPEEYGGDTMFVDISAKQGQNIDQLLEAVLLTADASLDLRANPDMDAQGIAIEAHLDRGRGPVATIIVQRGTLRVGDSIVVGDAYGRVRRMIDEHGNDVQEAGPSRPVQVLGLTSVSGAGDNLLVVDEDRTARQIADRRDARRRNALAARSRKRVSLEDLDEVLKETSTLNLILKGDNAGTVEALEDALLKIEVDDEVALNIIDRGVGAVTETNVHLAAASDAVIIGFNVRSEGKATEAANAEGVDIRYYSIIYKAIEEIEAALKGMLKPIYEEKEIGTAEIRQIFKASAVGLIAGCMVETGKVRRNAKVRLVRDGKVISEDATIDSLRREKDDVTEVSHGYECGMVLSYPNIEVGDRIEAYEMVEVPRD.

The tract at residues 54-323 (AQESKPTTPP…KRQKRNEYEA (270 aa)) is disordered. 4 stretches are compositionally biased toward low complexity: residues 80–154 (PKPG…AGKP), 185–197 (RGGATPGDMPRPG), 206–231 (GQAPRPGARPAQGQGRGQGTAKPGAA), and 238–250 (RPSPAMMPATPSP). Residues 260–303 (GFGGGRGRGGRPGGPGGPGGPGGPGPRGGRGGRRGGTAGAFGRP) show a composition bias toward gly residues. Basic residues predominate over residues 308–317 (RRGRKSKRQK). In terms of domain architecture, tr-type G spans 430–602 (QRPPVVTVMG…VLLTADASLD (173 aa)). The tract at residues 439-446 (GHVDHGKT) is G1. Residue 439–446 (GHVDHGKT) coordinates GTP. Residues 464–468 (GITQH) form a G2 region. The segment at 489–492 (DTPG) is G3. Residues 489–493 (DTPGH) and 543–546 (NKID) contribute to the GTP site. The segment at 543 to 546 (NKID) is G4. The segment at 579–581 (SAK) is G5.

This sequence belongs to the TRAFAC class translation factor GTPase superfamily. Classic translation factor GTPase family. IF-2 subfamily.

The protein localises to the cytoplasm. In terms of biological role, one of the essential components for the initiation of protein synthesis. Protects formylmethionyl-tRNA from spontaneous hydrolysis and promotes its binding to the 30S ribosomal subunits. Also involved in the hydrolysis of GTP during the formation of the 70S ribosomal complex. This Corynebacterium urealyticum (strain ATCC 43042 / DSM 7109) protein is Translation initiation factor IF-2.